A 118-amino-acid polypeptide reads, in one-letter code: Large ribosomal subunit protein uL18 (118 aa).

Residues 1 to 24 form a disordered region; that stretch reads MITKPDKNKIRQKRHRRVRGKLSG. Over residues 10-20 the composition is skewed to basic residues; that stretch reads IRQKRHRRVRG.

It belongs to the universal ribosomal protein uL18 family. Part of the 50S ribosomal subunit; part of the 5S rRNA/L5/L18/L25 subcomplex. Contacts the 5S and 23S rRNAs.

Its function is as follows. This is one of the proteins that bind and probably mediate the attachment of the 5S RNA into the large ribosomal subunit, where it forms part of the central protuberance. The polypeptide is Large ribosomal subunit protein uL18 (Streptococcus sanguinis (strain SK36)).